A 391-amino-acid chain; its full sequence is S-adenosylmethionine synthase (391 aa).

Residues 1–20 (MPRSDYLFTSESVSEGHPDK) are disordered. His17 provides a ligand contact to ATP. Position 19 (Asp19) interacts with Mg(2+). K(+) is bound at residue Glu45. Residues Glu58 and Gln102 each coordinate L-methionine. The flexible loop stretch occupies residues 102-112 (QSADIAQGVDA). Residues 169–171 (DAK), 235–236 (KF), Asp244, 250–251 (RK), Ala267, and Lys271 contribute to the ATP site. Asp244 contacts L-methionine. Position 275 (Lys275) interacts with L-methionine.

The protein belongs to the AdoMet synthase family. As to quaternary structure, homotetramer; dimer of dimers. Mg(2+) is required as a cofactor. It depends on K(+) as a cofactor.

It localises to the cytoplasm. The catalysed reaction is L-methionine + ATP + H2O = S-adenosyl-L-methionine + phosphate + diphosphate. It participates in amino-acid biosynthesis; S-adenosyl-L-methionine biosynthesis; S-adenosyl-L-methionine from L-methionine: step 1/1. In terms of biological role, catalyzes the formation of S-adenosylmethionine (AdoMet) from methionine and ATP. The overall synthetic reaction is composed of two sequential steps, AdoMet formation and the subsequent tripolyphosphate hydrolysis which occurs prior to release of AdoMet from the enzyme. This Methylorubrum extorquens (strain CM4 / NCIMB 13688) (Methylobacterium extorquens) protein is S-adenosylmethionine synthase.